Reading from the N-terminus, the 160-residue chain is 6,7-dimethyl-8-ribityllumazine synthase (160 aa).

5-amino-6-(D-ribitylamino)uracil is bound by residues Trp-28, 59-61, and 81-83; these read ALE and CVI. Position 86-87 (86-87) interacts with (2S)-2-hydroxy-3-oxobutyl phosphate; the sequence is ET. His-89 functions as the Proton donor in the catalytic mechanism. Asn-114 provides a ligand contact to 5-amino-6-(D-ribitylamino)uracil. Arg-128 provides a ligand contact to (2S)-2-hydroxy-3-oxobutyl phosphate.

The protein belongs to the DMRL synthase family.

It catalyses the reaction (2S)-2-hydroxy-3-oxobutyl phosphate + 5-amino-6-(D-ribitylamino)uracil = 6,7-dimethyl-8-(1-D-ribityl)lumazine + phosphate + 2 H2O + H(+). Its pathway is cofactor biosynthesis; riboflavin biosynthesis; riboflavin from 2-hydroxy-3-oxobutyl phosphate and 5-amino-6-(D-ribitylamino)uracil: step 1/2. Its function is as follows. Catalyzes the formation of 6,7-dimethyl-8-ribityllumazine by condensation of 5-amino-6-(D-ribitylamino)uracil with 3,4-dihydroxy-2-butanone 4-phosphate. This is the penultimate step in the biosynthesis of riboflavin. The chain is 6,7-dimethyl-8-ribityllumazine synthase from Corynebacterium jeikeium (strain K411).